We begin with the raw amino-acid sequence, 1300 residues long: uncharacterized protein (1300 aa).

An N-terminal signal peptide occupies residues 1 to 26 (MGYKLKRWPLVAFTFTGIGLGVVLAA). A lipid anchor (N-palmitoyl cysteine) is attached at Cys27. The S-diacylglycerol cysteine moiety is linked to residue Cys27. Residues 464–478 (AMAAASTGADSSSGT) show a composition bias toward low complexity. Disordered stretches follow at residues 464-487 (AMAAASTGADSSSGTNVGGSSGGN), 620-639 (ASVSVQTTQQNRQQSTDTQE), 774-797 (DSQKSTNTVKQPDIKPTRENNDKK), and 1244-1269 (KMSDSSSSSQGTKTIRKPKPHHSPRT). Polar residues-rich tracts occupy residues 620–637 (ASVSVQTTQQNRQQSTDT) and 774–783 (DSQKSTNTVK). Residues 785–797 (PDIKPTRENNDKK) are compositionally biased toward basic and acidic residues. Residues 1257-1269 (TIRKPKPHHSPRT) are compositionally biased toward basic residues.

This sequence belongs to the MG307/MG309/MG338 family.

The protein resides in the cell membrane. This is an uncharacterized protein from Mycoplasma pneumoniae (strain ATCC 29342 / M129 / Subtype 1) (Mycoplasmoides pneumoniae).